Reading from the N-terminus, the 706-residue chain is Gamma-adducin (706 aa).

The segment covering 1–10 (MSSDASQGVI) has biased composition (polar residues). The interval 1-20 (MSSDASQGVITTPPPPSMPH) is disordered. Ser-2 is modified (N-acetylserine). Phosphoserine is present on residues Ser-42, Ser-64, Ser-402, Ser-414, Ser-423, Ser-442, and Ser-461. 4 disordered regions span residues 471–497 (AEDS…LNTN), 535–555 (PSTM…NPFS), 575–610 (GLED…KLEE), and 666–706 (EKIE…KVEA). A Glycyl lysine isopeptide (Lys-Gly) (interchain with G-Cter in SUMO2) cross-link involves residue Lys-484. Phosphoserine is present on residues Ser-585, Ser-590, Ser-673, Ser-677, Ser-679, Ser-681, and Ser-683. Positions 589-602 (SSVSQIQSQTQSPQ) are enriched in low complexity. Basic residues predominate over residues 682–706 (PSKKKKKFRTPSFLKKNKKKEKVEA). Positions 684 to 701 (KKKKKFRTPSFLKKNKKK) are interaction with calmodulin.

This sequence belongs to the aldolase class II family. Adducin subfamily. Heterodimer of an alpha and a gamma subunit. In terms of processing, sumoylated. Proteolytically cleaved by asparagine endopeptidase (AEP) into 2 fragments. Overexpression of the 1-357 fragment induces neuronal apoptosis, and overexpression of either 1-357 or 358-706 fragment increases the degeneration of dendritic spines. Overexpression of the 1-357 fragment impairs neurite outgrowth by downregulating the expression of Rac2, and induces synaptic dysfunction and cognitive impairments in tau P301S transgenic mice, a mouse model for Alzheimer disease (AD). As to expression, ubiquitously expressed. In terms of tissue distribution, cleavage fragment 1-357 is abundantly expressed in the brain of patients with Alzheimer disease (AD), but hardly detectable in age-matched control individuals (at protein level).

The protein resides in the cytoplasm. It localises to the cytoskeleton. It is found in the cell membrane. In terms of biological role, membrane-cytoskeleton-associated protein that promotes the assembly of the spectrin-actin network. Plays a role in actin filament capping. Binds to calmodulin. Involved in myogenic reactivity of the renal afferent arteriole (Af-art), renal interlobular arteries and middle cerebral artery (MCA) to increased perfusion pressure. Involved in regulation of potassium channels in the vascular smooth muscle cells (VSMCs) of the Af-art and MCA ex vivo. Involved in regulation of glomerular capillary pressure, glomerular filtration rate (GFR) and glomerular nephrin expression in response to hypertension. Involved in renal blood flow (RBF) autoregulation. Plays a role in podocyte structure and function. Regulates globular monomer actin (G-actin) and filamentous polymer actin (F-actin) ratios in the primary podocytes affecting actin cytoskeleton organization. Regulates expression of synaptopodin, RhoA, Rac1 and CDC42 in the renal cortex and the primary podocytes. Regulates expression of nephrin in the glomeruli and in the primary podocytes, expression of nephrin and podocinin in the renal cortex, and expression of focal adhesion proteins integrin alpha-3 and integrin beta-1 in the glomeruli. Involved in cell migration and cell adhesion of podocytes, and in podocyte foot process effacement. Regulates expression of profibrotics markers MMP2, MMP9, TGF beta-1, tubular tight junction protein E-cadherin, and mesenchymal markers vimentin and alpha-SMA. Promotes the growth of neurites. In Homo sapiens (Human), this protein is Gamma-adducin (ADD3).